Reading from the N-terminus, the 287-residue chain is ATP synthase gamma chain (287 aa).

The protein belongs to the ATPase gamma chain family. In terms of assembly, F-type ATPases have 2 components, CF(1) - the catalytic core - and CF(0) - the membrane proton channel. CF(1) has five subunits: alpha(3), beta(3), gamma(1), delta(1), epsilon(1). CF(0) has three main subunits: a, b and c.

The protein resides in the cell inner membrane. Functionally, produces ATP from ADP in the presence of a proton gradient across the membrane. The gamma chain is believed to be important in regulating ATPase activity and the flow of protons through the CF(0) complex. This Xanthomonas axonopodis pv. citri (strain 306) protein is ATP synthase gamma chain.